A 277-amino-acid chain; its full sequence is Large ribosomal subunit protein uL2 (277 aa).

2 disordered regions span residues 32 to 58 (KSLTKGKKLKSGRDSSGRISIRRRGGG) and 225 to 277 (VAMN…RRNK). The span at 258–277 (YKTRKKKRYSDKFIIKRRNK) shows a compositional bias: basic residues.

Belongs to the universal ribosomal protein uL2 family. As to quaternary structure, part of the 50S ribosomal subunit. Forms a bridge to the 30S subunit in the 70S ribosome.

Functionally, one of the primary rRNA binding proteins. Required for association of the 30S and 50S subunits to form the 70S ribosome, for tRNA binding and peptide bond formation. It has been suggested to have peptidyltransferase activity; this is somewhat controversial. Makes several contacts with the 16S rRNA in the 70S ribosome. This Borrelia garinii subsp. bavariensis (strain ATCC BAA-2496 / DSM 23469 / PBi) (Borreliella bavariensis) protein is Large ribosomal subunit protein uL2.